The chain runs to 255 residues: MSQEFLARILEQKAREVEQMKLEQIQPLRQTYRLAEFLKNHQDCLQVIAEVKKASPSLGDINLDVDIVQQAQTYEENGAVMISVLTDEVFFKGHLDYLREISSQVEIPTLNKDFIIDEKQIIRARNAGATVILLIVAALSEERLKELYDYATELGLEVLVETHNLAELEVAHRLGAEIIGVNNRNLTTFEVDLQTSVDLAPYFEEGRYYISESAIFTGQDAERLAPYFNGILVGTALMQAENVAQRIKELQIDKG.

It belongs to the TrpC family.

It carries out the reaction 1-(2-carboxyphenylamino)-1-deoxy-D-ribulose 5-phosphate + H(+) = (1S,2R)-1-C-(indol-3-yl)glycerol 3-phosphate + CO2 + H2O. Its pathway is amino-acid biosynthesis; L-tryptophan biosynthesis; L-tryptophan from chorismate: step 4/5. This Streptococcus pneumoniae (strain Taiwan19F-14) protein is Indole-3-glycerol phosphate synthase.